The chain runs to 2134 residues: Genome polyprotein (2134 aa).

Topologically, residues 1-1377 are cytoplasmic; sequence MSKLFSTVGR…WLFERLKTSK (1377 aa). Positions 781-882 constitute an LRAT domain; it reads IVSCSGEKAK…GDYGTKEGEK (102 aa). Active-site residues include His-791 and His-802. Residue Cys-863 is the Acyl-thioester intermediate of the active site. The SF3 helicase domain occupies 1127 to 1289; the sequence is LNKLGRLDKP…EEFSTHAMLD (163 aa). Position 1153 to 1160 (1153 to 1160) interacts with ATP; the sequence is GNRGGGKS. An intramembrane segment occupies 1378-1392; it reads WYILGCVGAVLAVSA. Residues 1393-2134 are Cytoplasmic-facing; it reads LGVFAYHMIK…VKYRFIDDNF (742 aa). Tyr-1415 carries the O-(5'-phospho-RNA)-tyrosine modification. Residues 1431-1643 form the Peptidase C3 domain; the sequence is DAQSVVDISN…ITKEMIEEML (213 aa). Active-site for protease 3C activity residues include His-1477, Asp-1515, and Cys-1603. The region spanning 1880 to 2001 is the RdRp catalytic domain; the sequence is DLVVGLDFSN…CIKKEYLDQK (122 aa).

Belongs to the picornaviridae polyprotein family. Post-translationally, specific enzymatic cleavages by the viral protease in vivo yield a variety of precursors and mature proteins. During virion maturation, non-infectious particles are rendered infectious following cleavage of VP0. This maturation cleavage is followed by a conformational change of the particle. In terms of processing, VPg is uridylylated by the polymerase and is covalently linked to the 5'-end of genomic RNA. This uridylylated form acts as a nucleotide-peptide primer for the polymerase.

It localises to the virion. The protein localises to the host cytoplasm. It is found in the host cytoplasmic vesicle membrane. It catalyses the reaction RNA(n) + a ribonucleoside 5'-triphosphate = RNA(n+1) + diphosphate. The enzyme catalyses a ribonucleoside 5'-triphosphate + H2O = a ribonucleoside 5'-diphosphate + phosphate + H(+). It carries out the reaction Selective cleavage of Gln-|-Gly bond in the poliovirus polyprotein. In other picornavirus reactions Glu may be substituted for Gln, and Ser or Thr for Gly.. In terms of biological role, capsid proteins VP1, VP2, and VP3 form a closed capsid enclosing the viral positive strand RNA genome. All these proteins contain a beta-sheet structure called beta-barrel jelly roll. Together they form an icosahedral capsid (T=3) composed of 60 copies of each VP1, VP2, and VP3, with a diameter of approximately 300 Angstroms. VP1 is situated at the 12 fivefold axes, whereas VP2 and VP3 are located at the quasi-sixfold axes. Its function is as follows. VP0 precursor is a component of immature procapsids. The N-terminal domain of VP0, protein VP4, is needed for the assembly of 12 pentamers into the icosahedral structure. Unlike other picornaviruses, AEV VP4 may not be myristoylated. Protein 2B and 2BC precursor affect membrane integrity and cause an increase in membrane permeability. Functionally, associates with and induces structural rearrangements of intracellular membranes. It displays RNA-binding, nucleotide binding and NTPase activities. In terms of biological role, protein 3A, via its hydrophobic domain, serves as membrane anchor. Its function is as follows. Protein 3B is covalently linked to the 5'-end of both the positive-strand and negative-strand genomic RNAs. It acts as a genome-linked replication primer. Cysteine protease that generates mature viral proteins from the precursor polyprotein. In addition to its proteolytic activity, it binds to viral RNA, and thus influences viral genome replication. RNA and substrate bind cooperatively to the protease. Functionally, RNA-directed RNA polymerase 3D-POL replicates genomic and antigenomic RNA by recognizing replications specific signals. The protein is Genome polyprotein of Avian encephalomyelitis virus (strain Van Reokel) (AEV).